The primary structure comprises 173 residues: Co-chaperone protein HscB homolog (173 aa).

The region spanning 3–75 is the J domain; it reads NPFSLFNLPV…IARATAIIEI (73 aa).

The protein belongs to the HscB family. As to quaternary structure, interacts with HscA and stimulates its ATPase activity.

Co-chaperone involved in the maturation of iron-sulfur cluster-containing proteins. Seems to help targeting proteins to be folded toward HscA. The protein is Co-chaperone protein HscB homolog of Haemophilus ducreyi (strain 35000HP / ATCC 700724).